A 257-amino-acid polypeptide reads, in one-letter code: UPF0246 protein lpl1317 (257 aa).

Belongs to the UPF0246 family.

The protein is UPF0246 protein lpl1317 of Legionella pneumophila (strain Lens).